Reading from the N-terminus, the 75-residue chain is Mitotic-spindle organizing protein 1 (75 aa).

It belongs to the MOZART1 family. Part of the gamma-tubulin complex.

It localises to the cytoplasm. It is found in the cytoskeleton. The protein localises to the microtubule organizing center. Its subcellular location is the centrosome. The protein resides in the spindle. Its function is as follows. Required for gamma-tubulin complex recruitment to the centrosome. The sequence is that of Mitotic-spindle organizing protein 1 (mzt1) from Danio rerio (Zebrafish).